The chain runs to 59 residues: UPF0434 protein PBPRA2383 (59 aa).

This sequence belongs to the UPF0434 family.

The polypeptide is UPF0434 protein PBPRA2383 (Photobacterium profundum (strain SS9)).